The primary structure comprises 182 residues: Adenine phosphoribosyltransferase (182 aa).

This sequence belongs to the purine/pyrimidine phosphoribosyltransferase family. In terms of assembly, homodimer.

It localises to the cytoplasm. The enzyme catalyses AMP + diphosphate = 5-phospho-alpha-D-ribose 1-diphosphate + adenine. The protein operates within purine metabolism; AMP biosynthesis via salvage pathway; AMP from adenine: step 1/1. Functionally, catalyzes a salvage reaction resulting in the formation of AMP, that is energically less costly than de novo synthesis. This is Adenine phosphoribosyltransferase from Campylobacter jejuni subsp. jejuni serotype O:2 (strain ATCC 700819 / NCTC 11168).